We begin with the raw amino-acid sequence, 80 residues long: Conotoxin Bt6.5 (80 aa).

Residues 1 to 22 form the signal peptide; it reads MKLTCVLIIAVLFLTACQLATA. A propeptide spanning residues 23-45 is cleaved from the precursor; the sequence is KTYSTGRQKHRALRSTDKNIKLS. Intrachain disulfides connect cysteine 48-cysteine 62, cysteine 55-cysteine 66, and cysteine 61-cysteine 73.

It belongs to the conotoxin O1 superfamily. As to expression, expressed by the venom duct.

The protein localises to the secreted. When injected intracranially in mice, induces a series of symptoms such as quivering, climbing, scratching, barrel rolling and paralysis of limbs. Unexpectedly, no effect is observed on ionic currents when tested on locust DUM neuron. The sequence is that of Conotoxin Bt6.5 from Conus betulinus (Beech cone).